A 430-amino-acid chain; its full sequence is RNA-binding protein 34 (430 aa).

Disordered regions lie at residues 1–55 (MALE…GTGR), 72–123 (VPVP…ADRE), and 134–153 (EIHQ…VKVA). Residues Ser-14, Ser-28, and Ser-99 each carry the phosphoserine modification. Residues 23-34 (DGVRGSPPEDYR) show a composition bias toward basic and acidic residues. Over residues 113–123 (TNAEKKLADRE) the composition is skewed to basic and acidic residues. Residue Lys-151 is modified to N6-acetyllysine. RRM domains lie at 185 to 280 (RTVF…LASE) and 287 to 364 (RSVF…RSVN). Lys-242 participates in a covalent cross-link: Glycyl lysine isopeptide (Lys-Gly) (interchain with G-Cter in SUMO2). Ser-288 bears the Phosphoserine mark. Disordered regions lie at residues 365–395 (KEKF…KTAE) and 411–430 (KTKK…RKQK).

It belongs to the RRM RBM34 family.

It localises to the nucleus. Its subcellular location is the nucleolus. In Homo sapiens (Human), this protein is RNA-binding protein 34 (RBM34).